A 449-amino-acid polypeptide reads, in one-letter code: Baeyer-Villiger oxidase GME11358 (449 aa).

The protein belongs to the questin oxidase family.

It participates in secondary metabolite biosynthesis. In terms of biological role, baeyer-Villiger oxidase; part of the gene cluster that mediates the biosynthesis of dibenzodioxocinones such as pestalotiollide B, a novel class of inhibitors against cholesterol ester transfer protein (CEPT). The biosynthesis initiates from condensation of acetate and malonate units catalyzed by the non-reducing PKS pks8/GME11356. Pks8/GME11356 lacks a thioesterase (TE) domain, which is important to the cyclizing of the third ring of atrochrysone carboxylic acid, and the esterase GME11355 might play the role of TE and catalyzes the cyclization reaction of the C ring. The lactamase-like protein GME11357 (or other beta-lactamases in Pestalotiopsis microspora) probably hydrolyzes the thioester bond between the ACP of pks8/GME11356 and the intermediate to release atrochrysone carboxylic acid, which is spontaneously dehydrates to form endocrocin anthrone. Endocrocin anthrone is further converted to emodin via the endocrocin intermediate. Emodin is then oxidized by several enzymes such as the Baeyer-Villiger oxidase GME11358, the oxidoreductase GME11367, the short chain dehydrogenase/reductase GME11373, as well as by other oxidoreductases from the cluster, to modify the A and C rings and open the B ring, and finally yield monodictyphenone. The prenyltransferase GME11375 may catalyze the addition reaction between the C5 side chains and the carbon bone of dibenzodioxocinones. The remaining biochemical reactions to the final product dibenzodioxocinones should be methylation catalyzed by methyltransferase GME11366 and reduction and lactonization reaction catalyzed by a series of oxidordeuctases. This chain is Baeyer-Villiger oxidase GME11358, found in Pestalotiopsis microspora.